The sequence spans 931 residues: Bifunctional uridylyltransferase/uridylyl-removing enzyme (931 aa).

The uridylyltransferase stretch occupies residues 1–383; the sequence is MDSVATDSKA…TTGSTWRRVP (383 aa). Residues 384–739 are uridylyl-removing; sequence ESDDFIVDNN…VGFDPARGVT (356 aa). The HD domain occupies 499–622; the sequence is VDEHLIRCIG…VQSVEQMKLL (124 aa). 2 consecutive ACT domains span residues 740-822 and 851-931; these read ELTI…AVAR and VIEV…QPAA.

The protein belongs to the GlnD family. Mg(2+) is required as a cofactor.

The catalysed reaction is [protein-PII]-L-tyrosine + UTP = [protein-PII]-uridylyl-L-tyrosine + diphosphate. The enzyme catalyses [protein-PII]-uridylyl-L-tyrosine + H2O = [protein-PII]-L-tyrosine + UMP + H(+). Uridylyltransferase (UTase) activity is inhibited by glutamine, while glutamine activates uridylyl-removing (UR) activity. Modifies, by uridylylation and deuridylylation, the PII regulatory proteins (GlnB and homologs), in response to the nitrogen status of the cell that GlnD senses through the glutamine level. Under low glutamine levels, catalyzes the conversion of the PII proteins and UTP to PII-UMP and PPi, while under higher glutamine levels, GlnD hydrolyzes PII-UMP to PII and UMP (deuridylylation). Thus, controls uridylylation state and activity of the PII proteins, and plays an important role in the regulation of nitrogen fixation and metabolism. The chain is Bifunctional uridylyltransferase/uridylyl-removing enzyme from Bradyrhizobium sp. (strain ORS 278).